Consider the following 609-residue polypeptide: Granule-bound starch synthase 1, chloroplastic/amyloplastic (609 aa).

The N-terminal 77 residues, 1-77, are a transit peptide targeting the chloroplast; the sequence is MSALTTSQLA…SRRFPSVVVY (77 aa). The interval 29 to 67 is disordered; that stretch reads RHGFQGLKPRSPAGGDATSLSVTTSARATPKQQRSVQRG. The segment covering 46-66 has biased composition (polar residues); the sequence is TSLSVTTSARATPKQQRSVQR. Lysine 97 is an ADP-alpha-D-glucose binding site. 5 residues coordinate ADP: glycine 100, arginine 408, lysine 413, lysine 462, and glutamine 493. A disulfide bridge connects residues cysteine 337 and cysteine 529.

This sequence belongs to the glycosyltransferase 1 family. Bacterial/plant glycogen synthase subfamily.

It is found in the plastid. Its subcellular location is the chloroplast. The protein localises to the amyloplast. It catalyses the reaction an NDP-alpha-D-glucose + [(1-&gt;4)-alpha-D-glucosyl](n) = [(1-&gt;4)-alpha-D-glucosyl](n+1) + a ribonucleoside 5'-diphosphate + H(+). Its pathway is glycan biosynthesis; starch biosynthesis. Functionally, required for the synthesis of amylose in endosperm. The chain is Granule-bound starch synthase 1, chloroplastic/amyloplastic (WAXY) from Oryza sativa subsp. indica (Rice).